Consider the following 347-residue polypeptide: uncharacterized protein (347 aa).

This is an uncharacterized protein from Caenorhabditis elegans.